Consider the following 1416-residue polypeptide: MNNGILHQNYNSKKFDIIKISLASPEVIRSWSHGEVKKPETINYRTFKPERDGLFCAKIFGPIKDYECLCGKYKRLKHRGVVCERCGVEVEQAKVRRERMGHIDLVCPVVHIWYLKSLPSRIGLFLDMPLKNVEKVLYFESYIVTDPGMTPLEKKQLLTDDEYAEALENYGYEFEASMGAEAIRDLLADTDLETEIESLQAEYEESKSTAKKEKAIKRLRLLETFQASGNKPEWMVMTVLPVLPPDLRPLVPIEGGRFATSDLNDLYRRVINRNNRLKKLLDLNAPDIIVRNEKRMLQEAVDALLDNGRRGRAVTGSNKRPLKSLADMIKGKQGRFRQNLLGKRVDYSGRSVITVGPSLRLHECGLPKKMALELFKPFVYSKLRLGGYATTIKQAKRMVELEEAVVWDILEVVINEHPVLLNRAPTLHRLGIQAFEPKLIEGKAIQLHPLVCAAFNADFDGDQMAVHVPLTVESQLEARVLMMSTNNILSPASGQPIITPTQDIVLGLYYITREKEGARGEGKLFSNYDDVSRAYNSGTIDIHAKIKLRIDRQVFDTKGNTYNEKGVVNTTVGRALLLNILPEGLSFSLLNKVLVKKEISKIINQAFRVLGGKATVVLADKLMYAGFKYSTLSGVSVGVDDMTIPENKEAKVEEAEKEIKHITEQYQSSLITENERYNNIINIWSKTSDEVGASMMDAISKDTVMVNGENKEIESFNSVYMMAKSGARGSYNQMRQLAGMRGLMAKPDGTMIETAITANFREGLSVLQYFTSTHGARKGLADTALKTANAGYLTRRLVDVAQDLVVIEEDCGTDDGLMFSAIVEDGEVKVPLVERALGRTLAADVVTEKGVVLLEAGTLLDENLVEILDDNGIDMIKVRSPITCKTRRGLCAKCYGRDLARERKVNVGESVGVIAAQSIGEPGTQLTMRTFHTGGAASLGITVSDIKVKTAGKIKFKNIRTVTNKDGQNIVISRAGEIIVSDTMGRVREQHKIPMGAVVPLASGKGVEIGDVIATWDPHAQPLITDVAGKVVLEDVIDGITSKHTYDDLTGQQTIEITSISQRTTSKNLKPVVKVVDEKGNEIKSISLAVGAVLNVTDDSVLEVGDVVAKIPLEGSKNKDITGGLPRVAELFEARRPKDAAILSPCDGMVRLGNRDTKEKQRIEILDKSGHIAEEILLPKSRHLVVFDGEQVSKGDVLADGPTDPHDLLKYKGLEAFADYILIEAQSVYRMQGVVINDKHIETIVRQMLRKATILDEGDSKFVKDESIELVRILEENDRLAKEGKRLVEYELTLMGITRSSLSTESFLSAASFQETTRVLTEASIHSQVDQLRGLKENVLIGRLIPTGTGLAVRKESNKIEKMREELGVEDNMIFTEASSFNTEDTLFENQIEKEDKDINDDIEESLRNALESLDF.

Residues cysteine 68, cysteine 70, cysteine 83, and cysteine 86 each contribute to the Zn(2+) site. Aspartate 458, aspartate 460, and aspartate 462 together coordinate Mg(2+). Residues cysteine 811, cysteine 884, cysteine 891, and cysteine 894 each contribute to the Zn(2+) site.

It belongs to the RNA polymerase beta' chain family. In terms of assembly, the RNAP catalytic core consists of 2 alpha, 1 beta, 1 beta' and 1 omega subunit. When a sigma factor is associated with the core the holoenzyme is formed, which can initiate transcription. It depends on Mg(2+) as a cofactor. Zn(2+) serves as cofactor.

It carries out the reaction RNA(n) + a ribonucleoside 5'-triphosphate = RNA(n+1) + diphosphate. Functionally, DNA-dependent RNA polymerase catalyzes the transcription of DNA into RNA using the four ribonucleoside triphosphates as substrates. In Francisella philomiragia subsp. philomiragia (strain ATCC 25017 / CCUG 19701 / FSC 153 / O#319-036), this protein is DNA-directed RNA polymerase subunit beta'.